The sequence spans 321 residues: Glutaminase (321 aa).

Substrate-binding residues include Ser-69, Asn-120, Glu-165, Asn-172, Tyr-196, Tyr-248, and Val-266.

This sequence belongs to the glutaminase family. Homotetramer.

It catalyses the reaction L-glutamine + H2O = L-glutamate + NH4(+). In Bacteroides thetaiotaomicron (strain ATCC 29148 / DSM 2079 / JCM 5827 / CCUG 10774 / NCTC 10582 / VPI-5482 / E50), this protein is Glutaminase.